We begin with the raw amino-acid sequence, 496 residues long: Probable glycine dehydrogenase (decarboxylating) subunit 2 (496 aa).

An N6-(pyridoxal phosphate)lysine modification is found at lysine 265.

The protein belongs to the GcvP family. C-terminal subunit subfamily. As to quaternary structure, the glycine cleavage system is composed of four proteins: P, T, L and H. In this organism, the P 'protein' is a heterodimer of two subunits. Requires pyridoxal 5'-phosphate as cofactor.

It catalyses the reaction N(6)-[(R)-lipoyl]-L-lysyl-[glycine-cleavage complex H protein] + glycine + H(+) = N(6)-[(R)-S(8)-aminomethyldihydrolipoyl]-L-lysyl-[glycine-cleavage complex H protein] + CO2. In terms of biological role, the glycine cleavage system catalyzes the degradation of glycine. The P protein binds the alpha-amino group of glycine through its pyridoxal phosphate cofactor; CO(2) is released and the remaining methylamine moiety is then transferred to the lipoamide cofactor of the H protein. This is Probable glycine dehydrogenase (decarboxylating) subunit 2 from Thioalkalivibrio sulfidiphilus (strain HL-EbGR7).